The sequence spans 30 residues: GLFKTLIKGAGKMLGHVAKQFLGSQGQPES.

Expressed by the skin glands.

The protein resides in the secreted. In terms of biological role, has antimicrobial activity. This is Dermaseptin-3.1TR from Phyllomedusa trinitatis (Trinidad leaf frog).